Here is a 335-residue protein sequence, read N- to C-terminus: Aspartate carbamoyltransferase catalytic subunit (335 aa).

Carbamoyl phosphate-binding residues include arginine 81 and threonine 82. An L-aspartate-binding site is contributed by lysine 109. Carbamoyl phosphate-binding residues include arginine 131, histidine 159, and glutamine 162. Residues arginine 192 and arginine 246 each contribute to the L-aspartate site. The carbamoyl phosphate site is built by glycine 287 and proline 288.

It belongs to the aspartate/ornithine carbamoyltransferase superfamily. ATCase family. In terms of assembly, heterododecamer (2C3:3R2) of six catalytic PyrB chains organized as two trimers (C3), and six regulatory PyrI chains organized as three dimers (R2).

The catalysed reaction is carbamoyl phosphate + L-aspartate = N-carbamoyl-L-aspartate + phosphate + H(+). The protein operates within pyrimidine metabolism; UMP biosynthesis via de novo pathway; (S)-dihydroorotate from bicarbonate: step 2/3. Catalyzes the condensation of carbamoyl phosphate and aspartate to form carbamoyl aspartate and inorganic phosphate, the committed step in the de novo pyrimidine nucleotide biosynthesis pathway. The protein is Aspartate carbamoyltransferase catalytic subunit of Caulobacter sp. (strain K31).